A 256-amino-acid chain; its full sequence is (E)-benzylidenesuccinyl-CoA hydratase (256 aa).

Catalysis depends on Glu-110, which acts as the Nucleophile. Glu-130 serves as the catalytic Proton acceptor.

Belongs to the enoyl-CoA hydratase/isomerase family. As to quaternary structure, homotrimer.

It carries out the reaction (2S)-[(R)-hydroxy(phenyl)methyl]succinyl-CoA = (E)-2-benzylidenesuccinyl-CoA + H2O. It participates in xenobiotic degradation; toluene degradation. Its function is as follows. Involved in an anaerobic toluene degradation pathway. Catalyzes the hydration of (E)-2-benzylidenesuccinyl-CoA to the corresponding alcohol intermediate, 2-(alpha-hydroxybenzyl)succinyl-CoA. Also accepts the N-acetylcysteamine (NAC) thioester of (E)-benzylidenesuccinate. The chain is (E)-benzylidenesuccinyl-CoA hydratase from Thauera aromatica.